The chain runs to 367 residues: MEAERINLIGTTLEDLTERTQELRRYLDYDAKFERLRTVNASLEDPAVWNDPKKAQELGKEKKSLDAVVLTLQKLTTELADNAELYEMSKEEGDEAGLTTIEAEAEKLRPLIEELEFRRMFSNEADPLNCFVDIQAGAGGTEACDWASMLLRQYLKYAERKGFKATVEEETPGDVAGIKSATIKIEGEYAYGLLRTETGVHRLVRKSPFDSSGGRHTSFASLFVYPEIDDSIEININPSDVRTDTYRASGAGGQHINKTDSAVRLTHIPTGIVVQCQDGRSQHSNRDVAWQRLRSRLYDFEMRKRMEEQQKLEDTKTDVGWGHQIRSYVLDNSRIKDLRTNVEVSATQKVLDGDLDVFIEASLKQGV.

Gln254 is subject to N5-methylglutamine.

Belongs to the prokaryotic/mitochondrial release factor family. Post-translationally, methylated by PrmC. Methylation increases the termination efficiency of RF2.

Its subcellular location is the cytoplasm. Functionally, peptide chain release factor 2 directs the termination of translation in response to the peptide chain termination codons UGA and UAA. This chain is Peptide chain release factor 2, found in Acidovorax ebreus (strain TPSY) (Diaphorobacter sp. (strain TPSY)).